A 310-amino-acid polypeptide reads, in one-letter code: 4-diphosphocytidyl-2-C-methyl-D-erythritol kinase (310 aa).

The active site involves Lys11. 95–105 (PIGAGLAGGSA) is a binding site for ATP. Asp137 is a catalytic residue.

The protein belongs to the GHMP kinase family. IspE subfamily.

It carries out the reaction 4-CDP-2-C-methyl-D-erythritol + ATP = 4-CDP-2-C-methyl-D-erythritol 2-phosphate + ADP + H(+). Its pathway is isoprenoid biosynthesis; isopentenyl diphosphate biosynthesis via DXP pathway; isopentenyl diphosphate from 1-deoxy-D-xylulose 5-phosphate: step 3/6. Its function is as follows. Catalyzes the phosphorylation of the position 2 hydroxy group of 4-diphosphocytidyl-2C-methyl-D-erythritol. The sequence is that of 4-diphosphocytidyl-2-C-methyl-D-erythritol kinase from Acaryochloris marina (strain MBIC 11017).